The chain runs to 322 residues: Olfactory receptor 5P2 (322 aa).

Over 1 to 28 (MNSLKDGNHTALTGFILLGLTDDPILRV) the chain is Extracellular. N-linked (GlcNAc...) asparagine glycosylation occurs at asparagine 8. The chain crosses the membrane as a helical span at residues 29–42 (ILFMIILSGNLSII). Residues 43–50 (ILIRISSQ) lie on the Cytoplasmic side of the membrane. A helical transmembrane segment spans residues 51 to 71 (LHHPMYFFLSHLAFADMAYSS). At 72–95 (SVTPNMLVNFLVERNTVSYLGCAI) the chain is on the extracellular side. A disulfide bridge links cysteine 93 with cysteine 185. Residues 96–116 (QLGSAAFFATVECVLLAAMAY) traverse the membrane as a helical segment. At 117–135 (DRFVAICSPLLYSTKMSTQ) the chain is on the cytoplasmic side. A helical membrane pass occupies residues 136-156 (VSVQLLLVVYIAGFLIAVSYT). Residues 157-192 (TSFYFLLFCGPNQVNHFFCDFAPLLELSCSDISVST) lie on the Extracellular side of the membrane. A helical membrane pass occupies residues 193–213 (VVLSFSSGSIIVVTVCVIAVC). Residues 214 to 233 (YIYILITILKMRSTEGHHKA) lie on the Cytoplasmic side of the membrane. Residues 234–254 (FSTCTSHLTVVTLFYGTITFI) form a helical membrane-spanning segment. Residues 255–267 (YVMPNFSYSTDQN) are Extracellular-facing. N-linked (GlcNAc...) asparagine glycosylation occurs at asparagine 259. The helical transmembrane segment at 268-288 (KVVSVLYTVVIPMLNPLIYSL) threads the bilayer. The Cytoplasmic segment spans residues 289 to 322 (RNKEIKGALKRELVRKILSHDACYFSRTSNNDIT).

Belongs to the G-protein coupled receptor 1 family. As to expression, expressed in the tongue.

It is found in the cell membrane. Functionally, odorant receptor (Potential). May be involved in taste perception. The sequence is that of Olfactory receptor 5P2 (OR5P2) from Homo sapiens (Human).